Consider the following 344-residue polypeptide: Methionine synthase (344 aa).

Zn(2+)-binding residues include His-211, Cys-213, Glu-236, and Cys-315.

This sequence belongs to the archaeal MetE family. Zn(2+) is required as a cofactor.

It participates in amino-acid biosynthesis; L-methionine biosynthesis via de novo pathway. Catalyzes the transfer of a methyl group to L-homocysteine resulting in methionine formation. The physiological methyl donor is unknown. The chain is Methionine synthase from Thermoplasma volcanium (strain ATCC 51530 / DSM 4299 / JCM 9571 / NBRC 15438 / GSS1).